The chain runs to 67 residues: Large ribosomal subunit protein uL30 (67 aa).

Belongs to the universal ribosomal protein uL30 family. As to quaternary structure, part of the 50S ribosomal subunit.

The sequence is that of Large ribosomal subunit protein uL30 from Sinorhizobium medicae (strain WSM419) (Ensifer medicae).